Here is a 37-residue protein sequence, read N- to C-terminus: uncharacterized protein (37 aa).

This sequence belongs to the poxviridae A56.5 protein family.

This is an uncharacterized protein from Vaccinia virus (strain Western Reserve) (VACV).